The chain runs to 70 residues: Conotoxin Cl6.13 (70 aa).

The N-terminal stretch at Met-1–Asp-21 is a signal peptide. Residues Ala-22–Val-33 constitute a propeptide that is removed on maturation. Intrachain disulfides connect Cys-41–Cys-58, Cys-48–Cys-63, and Cys-57–Cys-68.

As to expression, expressed by the venom duct.

The protein localises to the secreted. The chain is Conotoxin Cl6.13 from Californiconus californicus (California cone).